Reading from the N-terminus, the 224-residue chain is Ribonuclease HII (224 aa).

The 203-residue stretch at 21 to 223 (RAIAGIDEAG…IRNAALEGEQ (203 aa)) folds into the RNase H type-2 domain. A divalent metal cation contacts are provided by D27, E28, and D124.

It belongs to the RNase HII family. Mn(2+) is required as a cofactor. Mg(2+) serves as cofactor.

It is found in the cytoplasm. It catalyses the reaction Endonucleolytic cleavage to 5'-phosphomonoester.. In terms of biological role, endonuclease that specifically degrades the RNA of RNA-DNA hybrids. In Roseiflexus castenholzii (strain DSM 13941 / HLO8), this protein is Ribonuclease HII.